Here is a 344-residue protein sequence, read N- to C-terminus: Small ribosomal subunit protein mS38 (344 aa).

Disordered regions lie at residues Met1–Ala27, Ala43–Ser101, and Lys325–Leu344. Over residues Ser51 to Ala74 the composition is skewed to low complexity. Residues Lys325 to Arg338 show a composition bias toward basic residues.

Belongs to the mitochondrion-specific ribosomal protein mS38 family. In terms of assembly, component of the mitochondrial small ribosomal subunit (mt-SSU). Mature N.crassa 74S mitochondrial ribosomes consist of a small (37S) and a large (54S) subunit. The 37S small subunit contains a 16S ribosomal RNA (16S mt-rRNA) and 32 different proteins. The 54S large subunit contains a 23S rRNA (23S mt-rRNA) and 42 different proteins.

The protein localises to the mitochondrion. Component of the mitochondrial ribosome (mitoribosome), a dedicated translation machinery responsible for the synthesis of mitochondrial genome-encoded proteins, including at least some of the essential transmembrane subunits of the mitochondrial respiratory chain. The mitoribosomes are attached to the mitochondrial inner membrane and translation products are cotranslationally integrated into the membrane. The chain is Small ribosomal subunit protein mS38 (cox24) from Neurospora crassa (strain ATCC 24698 / 74-OR23-1A / CBS 708.71 / DSM 1257 / FGSC 987).